We begin with the raw amino-acid sequence, 60 residues long: Large ribosomal subunit protein bL32 (60 aa).

Residues 1-23 (MAKHPVPKKKTSKARRDARRSHH) are compositionally biased toward basic residues. Positions 1–28 (MAKHPVPKKKTSKARRDARRSHHALTPP) are disordered.

Belongs to the bacterial ribosomal protein bL32 family. Part of the 50S ribosomal subunit.

In terms of biological role, found on the solvent side of the large subunit. The polypeptide is Large ribosomal subunit protein bL32 (rpmF) (Thermus thermophilus (strain ATCC BAA-163 / DSM 7039 / HB27)).